Reading from the N-terminus, the 418-residue chain is Methylmalonic aciduria type A protein, mitochondrial (418 aa).

The transit peptide at 1–65 (MPMLLPHPHQ…LLSDGLKRKL (65 aa)) directs the protein to the mitochondrion. GTP-binding positions include 150–158 (GPPGAGKST), Asp292, and 328–330 (SAR).

It belongs to the SIMIBI class G3E GTPase family. ArgK/MeaB subfamily. As to quaternary structure, homodimer. Interacts with MMUT (the apoenzyme form); the interaction is GTP dependent. As to expression, widely expressed. Highest expression is observed in liver and skeletal muscle.

Its subcellular location is the mitochondrion. It is found in the cytoplasm. The catalysed reaction is GTP + H2O = GDP + phosphate + H(+). Its activity is regulated as follows. GTPase activity is stimulated by MMUT. In terms of biological role, GTPase, binds and hydrolyzes GTP. Involved in intracellular vitamin B12 metabolism, mediates the transport of cobalamin (Cbl) into mitochondria for the final steps of adenosylcobalamin (AdoCbl) synthesis. Functions as a G-protein chaperone that assists AdoCbl cofactor delivery from MMAB to the methylmalonyl-CoA mutase (MMUT). Plays a dual role as both a protectase and a reactivase for MMUT. Protects MMUT from progressive inactivation by oxidation by decreasing the rate of the formation of the oxidized inactive cofactor hydroxocobalamin (OH2Cbl). Additionally acts a reactivase by promoting the replacement of OH2Cbl by the active cofactor AdoCbl, restoring the activity of MMUT in the presence and hydrolysis of GTP. The sequence is that of Methylmalonic aciduria type A protein, mitochondrial from Homo sapiens (Human).